A 660-amino-acid chain; its full sequence is Arginine--tRNA ligase, cytoplasmic (660 aa).

At methionine 1 the chain carries N-acetylmethionine. The could be involved in the assembly of the multisynthetase complex stretch occupies residues 1-72 (MDVLVSECSA…QAERNKPTKN (72 aa)). L-arginine contacts are provided by residues 200–202 (SPN), histidine 211, tyrosine 384, aspartate 388, and glutamine 412. A 'HIGH' region motif is present at residues 201–212 (PNIAKEMHVGHL). The tract at residues 529–543 (NTAAYLLYAFTRIRS) is interaction with tRNA.

Belongs to the class-I aminoacyl-tRNA synthetase family. Interacts (via N-terminus) with AIMP1 (via N-terminus); this stimulates its catalytic activity. Interacts (via N-terminus) with LARS2 (via C-terminus). Monomer. Part of a multisubunit complex that groups tRNA ligases for Arg (RARS1), Asp (DARS1), Gln (QARS1), Ile (IARS1), Leu (LARS1), Lys (KARS1), Met (MARS1) the bifunctional ligase for Glu and Pro (EPRS1) and the auxiliary subunits AIMP1/p43, AIMP2/p38 and EEF1E1/p18. Interacts with QARS1. Part of a complex composed of RARS1, QARS1 and AIMP1.

The protein resides in the cytoplasm. Its subcellular location is the cytosol. It catalyses the reaction tRNA(Arg) + L-arginine + ATP = L-arginyl-tRNA(Arg) + AMP + diphosphate. Forms part of a macromolecular complex that catalyzes the attachment of specific amino acids to cognate tRNAs during protein synthesis. Modulates the secretion of AIMP1 and may be involved in generation of the inflammatory cytokine EMAP2 from AIMP1. This is Arginine--tRNA ligase, cytoplasmic from Homo sapiens (Human).